Reading from the N-terminus, the 580-residue chain is Glutamyl-tRNA(Gln) amidotransferase subunit B-2, chloroplastic/mitochondrial (580 aa).

2 stretches are compositionally biased toward low complexity: residues 20 to 35 and 42 to 59; these read RRDA…ATVS and AVST…SAAV. Residues 20 to 64 are disordered; it reads RRDATAAASTSAATVSRGRRARAVSTTTTTSSSSSSSAAVDARDA.

It belongs to the GatB/GatE family. GatB subfamily. Subunit of the heterotrimeric GatCAB amidotransferase (AdT) complex, composed of A, B and C subunits.

Its subcellular location is the mitochondrion. It is found in the plastid. It localises to the chloroplast. It catalyses the reaction L-glutamyl-tRNA(Gln) + L-glutamine + ATP + H2O = L-glutaminyl-tRNA(Gln) + L-glutamate + ADP + phosphate + H(+). Allows the formation of correctly charged Gln-tRNA(Gln) through the transamidation of misacylated Glu-tRNA(Gln) in chloroplasts and mitochondria. The reaction takes place in the presence of glutamine and ATP through an activated gamma-phospho-Glu-tRNA(Gln). This Micromonas pusilla (strain CCMP1545) (Picoplanktonic green alga) protein is Glutamyl-tRNA(Gln) amidotransferase subunit B-2, chloroplastic/mitochondrial.